A 251-amino-acid polypeptide reads, in one-letter code: Segregation and condensation protein A (251 aa).

This sequence belongs to the ScpA family. Component of a cohesin-like complex composed of ScpA, ScpB and the Smc homodimer, in which ScpA and ScpB bind to the head domain of Smc. The presence of the three proteins is required for the association of the complex with DNA.

Its subcellular location is the cytoplasm. Its function is as follows. Participates in chromosomal partition during cell division. May act via the formation of a condensin-like complex containing Smc and ScpB that pull DNA away from mid-cell into both cell halves. The polypeptide is Segregation and condensation protein A (Bacillus licheniformis (strain ATCC 14580 / DSM 13 / JCM 2505 / CCUG 7422 / NBRC 12200 / NCIMB 9375 / NCTC 10341 / NRRL NRS-1264 / Gibson 46)).